Reading from the N-terminus, the 150-residue chain is MIVIINASNEQHDLKFSLANLDAIVKEVIQKEQQTCDEVNIYFVDTATICKLHLDYFNDDTPTDCISFPMDKDENSPYKILGEIFVCPQTAIEYALSHELDPYEETTLYLVHGLLHLMGYDDLEENDFLIMKEAEIRHMTHLKKLELYIK.

Residues His112, His116, and Asp122 each contribute to the Zn(2+) site.

It belongs to the endoribonuclease YbeY family. Requires Zn(2+) as cofactor.

It localises to the cytoplasm. Single strand-specific metallo-endoribonuclease involved in late-stage 70S ribosome quality control and in maturation of the 3' terminus of the 16S rRNA. The chain is Endoribonuclease YbeY from Protochlamydia amoebophila (strain UWE25).